Consider the following 449-residue polypeptide: Glucose-6-phosphate isomerase (449 aa).

Catalysis depends on Glu291, which acts as the Proton donor. Catalysis depends on residues His312 and Lys426.

This sequence belongs to the GPI family.

The protein resides in the cytoplasm. The catalysed reaction is alpha-D-glucose 6-phosphate = beta-D-fructose 6-phosphate. It participates in carbohydrate biosynthesis; gluconeogenesis. It functions in the pathway carbohydrate degradation; glycolysis; D-glyceraldehyde 3-phosphate and glycerone phosphate from D-glucose: step 2/4. Catalyzes the reversible isomerization of glucose-6-phosphate to fructose-6-phosphate. This is Glucose-6-phosphate isomerase from Streptococcus pyogenes serotype M4 (strain MGAS10750).